We begin with the raw amino-acid sequence, 164 residues long: UPF0303 protein RHE_CH02903 (164 aa).

The protein belongs to the UPF0303 family.

This chain is UPF0303 protein RHE_CH02903, found in Rhizobium etli (strain ATCC 51251 / DSM 11541 / JCM 21823 / NBRC 15573 / CFN 42).